The following is a 473-amino-acid chain: Glutamate--tRNA ligase (473 aa).

The 'HIGH' region signature appears at 11-21 (PSPTGFLHIGG). The short motif at 240–244 (KLSKR) is the 'KMSKS' region element. Position 243 (Lys243) interacts with ATP.

Belongs to the class-I aminoacyl-tRNA synthetase family. Glutamate--tRNA ligase type 1 subfamily. In terms of assembly, monomer.

It is found in the cytoplasm. It carries out the reaction tRNA(Glu) + L-glutamate + ATP = L-glutamyl-tRNA(Glu) + AMP + diphosphate. Functionally, catalyzes the attachment of glutamate to tRNA(Glu) in a two-step reaction: glutamate is first activated by ATP to form Glu-AMP and then transferred to the acceptor end of tRNA(Glu). The protein is Glutamate--tRNA ligase of Afipia carboxidovorans (strain ATCC 49405 / DSM 1227 / KCTC 32145 / OM5) (Oligotropha carboxidovorans).